The following is a 252-amino-acid chain: 5'-nucleotidase SurE (252 aa).

Residues Asp8, Asp9, Ser39, and Asn91 each contribute to the a divalent metal cation site.

Belongs to the SurE nucleotidase family. Requires a divalent metal cation as cofactor.

It is found in the cytoplasm. It carries out the reaction a ribonucleoside 5'-phosphate + H2O = a ribonucleoside + phosphate. Functionally, nucleotidase that shows phosphatase activity on nucleoside 5'-monophosphates. This is 5'-nucleotidase SurE from Legionella pneumophila (strain Paris).